Reading from the N-terminus, the 749-residue chain is Cytosolic phospholipase A2 (749 aa).

The C2 domain occupies 1–124 (MASIDPYQHI…GEKKQVPFTF (124 aa)). The phospholipid binding stretch occupies residues 1–178 (MASIDPYQHI…LRKLLGPEKT (178 aa)). Ca(2+) is bound by residues D40, T41, D43, N65, D93, A94, and N95. The PLA2c domain maps to 138 to 740 (VCSSTDLRFS…NDVEARKLLH (603 aa)). The active-site Nucleophile is S229. The interval 417–458 (MEEEIENLKPKHILGNDSSDSDDEMQEPKGTENSKAEEEYQR) is disordered. The segment covering 442-457 (QEPKGTENSKAEEEYQ) has biased composition (basic and acidic residues). Residue D549 is the Proton acceptor of the active site.

It localises to the cytoplasm. It is found in the cytoplasmic vesicle. The catalysed reaction is a 1,2-diacyl-sn-glycero-3-phosphocholine + H2O = a 1-acyl-sn-glycero-3-phosphocholine + a fatty acid + H(+). The enzyme catalyses a 1-acyl-sn-glycero-3-phosphocholine + H2O = sn-glycerol 3-phosphocholine + a fatty acid + H(+). Stimulated by agonists such as ATP, EGF, thrombin and bradykinin as well as by cytosolic Ca(2+). Selectively hydrolyzes arachidonyl phospholipids in the sn-2 position releasing arachidonic acid. Together with its lysophospholipid activity, it is implicated in the initiation of the inflammatory response. In Xenopus tropicalis (Western clawed frog), this protein is Cytosolic phospholipase A2 (pla2g4a).